The primary structure comprises 646 residues: FAD-binding monooxygenase prhK (646 aa).

N-linked (GlcNAc...) asparagine glycosylation is present at asparagine 46. Residues 80-97 form a helical membrane-spanning segment; it reads IIIIGAGFGGLLFAVRLI. Residues 119–122, 131–132, and tyrosine 137 each bind FAD; these read TWYW and DT. 129 to 131 lines the NADP(+) pocket; that stretch reads MCD. NADP(+) is bound by residues 275 to 281 and 298 to 299; these read TGATAIQ and RT. N-linked (GlcNAc...) asparagine glycosylation is found at asparagine 429, asparagine 483, and asparagine 529.

Belongs to the FAD-binding monooxygenase family. Requires FAD as cofactor.

It is found in the membrane. It carries out the reaction preaustinoid A + AH2 + O2 = preaustinoid A1 + A + H2O. Its pathway is secondary metabolite biosynthesis; terpenoid biosynthesis. FAD-binding monooxygenase; part of the gene cluster that mediates the biosynthesis of paraherquonin, a meroterpenoid with a unique, highly congested hexacyclic molecular architecture. The first step of the pathway is the synthesis of 3,5-dimethylorsellinic acid (DMOA) by the polyketide synthase prhL. Synthesis of DMOA is followed by farnesylation by the prenyltransferase prhE, methylesterification by the methyl-transferase prhM, epoxidation of the prenyl chain by the flavin-dependent monooxygenase prhF, and cyclization of the farnesyl moiety by the terpene cyclase prhH, to yield the tetracyclic intermediate, protoaustinoid A. The short chain dehydrogenase prhI then oxidizes the C-3 alcohol group of the terpene cyclase product to transform protoaustinoid A into protoaustinoid B. The FAD-binding monooxygenase prhJ catalyzes the oxidation of protoaustinoid B into preaustinoid A which is further oxidized into preaustinoid A1 by FAD-binding monooxygenase phrK. Finally, prhA leads to berkeleydione via the berkeleyone B intermediate. PrhA is a multifunctional dioxygenase that first desaturates at C5-C6 to form berkeleyone B, followed by rearrangement of the A/B-ring to form the cycloheptadiene moiety in berkeleydione. Berkeleydione serves as the key intermediate for the biosynthesis of paraherquonin as well as many other meroterpenoids. The cytochrome P450 monooxygenases prhB, prhD, and prhN, as well as the isomerase prhC, are probably involved in the late stage of paraherquonin biosynthesis, after the production of berkeleydione. Especially prhC might be a multifunctional enzyme that catalyzes the D-ring expansion via intramolecular methoxy rearrangement, as well as the hydrolysis of the expanded D-ring. The sequence is that of FAD-binding monooxygenase prhK from Penicillium brasilianum.